The sequence spans 429 residues: Glutamate-1-semialdehyde 2,1-aminomutase 2 (429 aa).

Lysine 268 carries the N6-(pyridoxal phosphate)lysine modification.

This sequence belongs to the class-III pyridoxal-phosphate-dependent aminotransferase family. HemL subfamily. Homodimer. Requires pyridoxal 5'-phosphate as cofactor.

It is found in the cytoplasm. The enzyme catalyses (S)-4-amino-5-oxopentanoate = 5-aminolevulinate. Its pathway is porphyrin-containing compound metabolism; protoporphyrin-IX biosynthesis; 5-aminolevulinate from L-glutamyl-tRNA(Glu): step 2/2. This is Glutamate-1-semialdehyde 2,1-aminomutase 2 from Staphylococcus aureus (strain USA300).